A 712-amino-acid polypeptide reads, in one-letter code: Ribosomal RNA large subunit methyltransferase K/L (712 aa).

Residues 43-154 enclose the THUMP domain; sequence TAYRCCLWTR…GEKGVLGLDM (112 aa).

Belongs to the methyltransferase superfamily. RlmKL family.

The protein localises to the cytoplasm. The catalysed reaction is guanosine(2445) in 23S rRNA + S-adenosyl-L-methionine = N(2)-methylguanosine(2445) in 23S rRNA + S-adenosyl-L-homocysteine + H(+). It catalyses the reaction guanosine(2069) in 23S rRNA + S-adenosyl-L-methionine = N(2)-methylguanosine(2069) in 23S rRNA + S-adenosyl-L-homocysteine + H(+). In terms of biological role, specifically methylates the guanine in position 2445 (m2G2445) and the guanine in position 2069 (m7G2069) of 23S rRNA. The protein is Ribosomal RNA large subunit methyltransferase K/L of Photobacterium profundum (strain SS9).